Reading from the N-terminus, the 309-residue chain is Olfactory receptor 10J5 (309 aa).

Residues 1–25 (MKRKNFTEVSEFIFLGFSSFGKHQI) lie on the Extracellular side of the membrane. Asn5 carries an N-linked (GlcNAc...) asparagine glycan. The helical transmembrane segment at 26–46 (TLFVVFLTVYILTLVANIIIV) threads the bilayer. Over 47-54 (TIICIDHH) the chain is Cytoplasmic. The helical transmembrane segment at 55-75 (LHTPMYFFLSMLASSETVYTL) threads the bilayer. Residues 76–99 (VIVPRMLLSLIFHNQPISLAGCAT) are Extracellular-facing. Cys97 and Cys188 are oxidised to a cystine. Residues 100–120 (QMFFFVILATNNCFLLTAMGY) traverse the membrane as a helical segment. At 121-139 (DRYVAICRPLRYTVIMSKG) the chain is on the cytoplasmic side. Residues 140 to 160 (LCAQLVCGSFGIGLTMAVLHV) form a helical membrane-spanning segment. Topologically, residues 161–196 (TAMFNLPFCGTVVDHFFCDIYPVMKLSCIDTTINEI) are extracellular. Residues 197-216 (INYGVSSFVIFVPIGLIFIS) form a helical membrane-spanning segment. At 217-236 (YVLVISSILQIASAEGRKKT) the chain is on the cytoplasmic side. The chain crosses the membrane as a helical span at residues 237–257 (FATCVSHLTVVIVHCGCASIA). Residues 258–270 (YLKPKSESSIEKD) lie on the Extracellular side of the membrane. A helical transmembrane segment spans residues 271–291 (LVLSVTYTIITPLLNPVVYSL). The Cytoplasmic segment spans residues 292-309 (RNKEVKDALCRVVGRNIS).

It belongs to the G-protein coupled receptor 1 family. Expressed in both the aorta, the coronary artery and umbilical vein endothelial cells (HUVECs) (at protein level).

Its subcellular location is the cell membrane. Its function is as follows. Olfactory receptor. Activated by the synthetic floral odorant, lyral, and by alpha-cedrene, a sesquiterpene constituent of cedarwood oil. Its activation increases intracellular Ca(2+). Acts as a key regulator of myogenesis through its actions on cell migration and adhesion by activating the Ca(2+)-dependent AKT signal transduction pathway. Also acts as a regulator of angiogenesis. Moreover, plays a role in the regulation of lipid accumulation in hepatocytes via the cAMP-PKA pathway. May be involved in sperm chemotaxis and motility. In Homo sapiens (Human), this protein is Olfactory receptor 10J5.